Here is an 8922-residue protein sequence, read N- to C-terminus: Protein clarinet (8922 aa).

Residues 11–35 (SKGPPLEEVREESEEDAQVPEQVVS) form a disordered region. Acidic residues predominate over residues 19–28 (VREESEEDAQ). Residues 385 to 405 (KDETKLILKSVEDKLETTEIE) adopt a coiled-coil conformation. 55 disordered regions span residues 527 to 579 (QEAA…EPEL), 622 to 673 (IVIS…EPEL), 687 to 860 (LAEK…KEPE), 880 to 955 (SFEQ…EPEL), 971 to 1049 (EQSS…EPEL), 1062 to 1139 (SSAE…MESR), 1151 to 1331 (IARI…EPEL), 1347 to 1420 (EQSS…VMES), 1444 to 1520 (SFEQ…PELT), 1538 to 1619 (SFEQ…EEID), 1632 to 1710 (SFEQ…LTQE), 1726 to 1801 (SFEQ…VPEL), 1820 to 1898 (SFEQ…LTQE), 1939 to 1992 (VISE…LTQE), 2032 to 2084 (IVIS…SELT), 2126 to 2175 (IVIS…SKEP), 2194 to 2213 (QSSFEQASTITDRPPLPVRL), 2220 to 2246 (IVISEQHEGDRSSATPGADYERSYDQD), 2329 to 2403 (SFEQ…KKPE), 2423 to 2497 (SFEQ…KPEL), 2516 to 2594 (SFEQ…LTQE), 2610 to 2684 (SFEQ…KEPE), 2704 to 2845 (SFEQ…ERPF), 2892 to 2963 (SFEQ…MESK), 2983 to 3155 (EQSS…EPEL), 3171 to 3249 (EQSS…EPEL), 3268 to 3337 (SFEQ…PVML), 3619 to 3639 (SITPSEGDDGGSSETGHPTTD), 3995 to 4079 (AEPV…QEEI), 4117 to 4169 (IVIS…PELT), 4181 to 4271 (SLAE…STTI), 4557 to 4624 (QASA…TQEE), 4636 to 4656 (EQSSFEQASTIPDRPPLPVRL), 4666 to 4685 (SEQHEGDISSATSGADYERS), 4730 to 4801 (EQSS…GVTQ), 4855 to 4899 (PANP…PLQD), 5004 to 5036 (PEDFSEATSGADTESISETTANKKDSNDSNGLT), 5360 to 5379 (LAMFTNPSPSASPSLLRKES), 5390 to 5413 (RRSSGADSRASNDSSASRLPDTAL), 5484 to 5511 (KKQISSRTESTNSRVSSEGIDEEVENEV), 5540 to 5572 (PPIAISHPTPPHSAKTDTGSRHSSGSSAHSQFG), 6194 to 6303 (AEPV…ESES), 6354 to 6437 (DVES…GSRM), 6487 to 6510 (SSKSSTSLGTSAPTKSIPSPQIGI), 6577 to 6609 (ARFPPPSSQIPTRSPSVMSSSIMSELPPGLDDL), 6668 to 6691 (NAETDSSSSVITSRQPSRSPSVAR), 6728 to 6768 (AEFE…VPPG), 6998 to 7018 (TERKQREESPTRESGYATSTS), 7045 to 7098 (ARSR…DDFD), 7137 to 7175 (FDGDESELPHQDFVFNEPTTKKTSDFDFPKETDEVFEKP), 7202 to 7263 (EAPS…YPDR), 7313 to 7350 (KTTTSQTPSTSTKPTVTAPKRSDPIPIAPSQRSKEIEE), 7598 to 7623 (DSVRDDNERNENETTSPRGLKRSPGM), 7760 to 7797 (TRRHQHQQQHQAPVYITSSASRPPSAAGSNIFQESRPT), and 7842 to 7881 (HIRQPVSVRSPRAQTGTTQTTAASGSASNSIRPSIGSSSV). Basic and acidic residues predominate over residues 531–552 (SDNHEKERSSATSKADYERSFD). Residues 760 to 776 (MESKEPELTQEEIDHIA) show a composition bias toward basic and acidic residues. The segment covering 1062–1076 (SSAEQSSFEQASTVP) has biased composition (low complexity). Residues 1230–1244 (MESKEPELTQEEIDH) are compositionally biased toward basic and acidic residues. Residues 1251–1261 (IAEQSSFEQAS) show a composition bias toward polar residues. Composition is skewed to basic and acidic residues over residues 1606–1619 (MESKEPELTQEEID) and 1700–1710 (MESKEPELTQE). 2 stretches are compositionally biased toward basic and acidic residues: residues 1888–1898 (MESKEPELTQE) and 1982–1992 (MESKESELTQE). Residues 2194 to 2204 (QSSFEQASTIT) show a composition bias toward polar residues. The segment covering 2584 to 2594 (MESKEPELTQE) has biased composition (basic and acidic residues). The span at 2772–2788 (MESKEPELTQEEIDHIA) shows a compositional bias: basic and acidic residues. Residues 2793–2803 (LAEQSSFEQAS) are compositionally biased toward polar residues. A compositionally biased stretch (polar residues) spans 3076-3085 (APSSSFEQAS). The span at 4035 to 4044 (GTSFPDNAET) shows a compositional bias: polar residues. The segment covering 4065-4079 (PVMKSKEPELTQEEI) has biased composition (basic and acidic residues). Polar residues-rich tracts occupy residues 4182 to 4195 (LAEQSSFEQTSTIP), 4223 to 4234 (SATSGADYQQSF), and 4255 to 4271 (MESTQPELTQDHSSTTI). A compositionally biased stretch (basic and acidic residues) spans 4571-4580 (IVEKREDDKS). Residues 4581 to 4594 (NITSGADYQQSFDQ) are compositionally biased toward polar residues. Residues 4613–4624 (MESKEPELTQEE) show a composition bias toward basic and acidic residues. A compositionally biased stretch (polar residues) spans 4636–4645 (EQSSFEQAST). Residues 4730 to 4739 (EQSSFEQAST) are compositionally biased toward polar residues. The segment covering 4871–4890 (EGSSSATSGADIPSSFDISS) has biased composition (low complexity). Polar residues predominate over residues 5009–5023 (EATSGADTESISETT). Residues 5390–5407 (RRSSGADSRASNDSSASR) show a composition bias toward low complexity. The span at 5486 to 5499 (QISSRTESTNSRVS) shows a compositional bias: polar residues. Residues 5540–5550 (PPIAISHPTPP) are compositionally biased toward pro residues. The span at 5560-5572 (RHSSGSSAHSQFG) shows a compositional bias: low complexity. Polar residues-rich tracts occupy residues 6225–6245 (ASSGASGSFDNNNAQVLTSGF) and 6270–6284 (KTVSPTPSADSMASR). 2 stretches are compositionally biased toward basic and acidic residues: residues 6285–6303 (KSSEYDIRSISEIRQESES) and 6376–6422 (GEGE…EESL). Residues 6494–6505 (LGTSAPTKSIPS) are compositionally biased toward polar residues. The span at 6590–6600 (SPSVMSSSIMS) shows a compositional bias: low complexity. Over residues 6670–6687 (ETDSSSSVITSRQPSRSP) the composition is skewed to polar residues. Over residues 6735–6747 (SQVPSRQPSRSPS) the composition is skewed to low complexity. Composition is skewed to basic and acidic residues over residues 6998–7008 (TERKQREESPT) and 7045–7069 (ARSRRDSRDEVLHRREEDPEVHTPE). Over residues 7071 to 7086 (SSTAVVTDVPSVSPVT) the composition is skewed to low complexity. Positions 7155 to 7175 (TTKKTSDFDFPKETDEVFEKP) are enriched in basic and acidic residues. Positions 7248–7260 (SDEESCSEDDEEY) are enriched in acidic residues. Positions 7313–7331 (KTTTSQTPSTSTKPTVTAP) are enriched in low complexity. A compositionally biased stretch (basic and acidic residues) spans 7599-7609 (SVRDDNERNEN). Low complexity-rich tracts occupy residues 7777-7788 (SSASRPPSAAGS) and 7854-7880 (AQTGTTQTTAASGSASNSIRPSIGSSS). Residues 7895 to 7915 (KKELKDVLIQRKQRLEATEIE) are a coiled coil. A disordered region spans residues 8510 to 8562 (SRRRAQETALTSSNKISTGSRSYARRPIRPSSYRNPEATNSMPDRHVARRTAE). 2 stretches are compositionally biased toward polar residues: residues 8517 to 8530 (TALTSSNKISTGSR) and 8541 to 8551 (SYRNPEATNSM). Positions 8552–8562 (PDRHVARRTAE) are enriched in basic and acidic residues. One can recognise a PDZ domain in the interval 8570-8661 (RILLTRSYKH…EIEMVIRTYK (92 aa)). The C2 domain maps to 8714 to 8835 (CHGHIQVSLG…SAINTGPRWY (122 aa)).

As to expression, expressed in the nervous system.

It is found in the synapse. The protein resides in the cell projection. The protein localises to the axon. Functionally, required for synapse development in the active zone of presynaptic terminals of specific neurons including serotonergic NSM neurons. The active zone is a protein-dense neuronal region within the presynaptic bouton, from which synaptic vesicles send neurotransmitter signals across the synapse. Plays a role in the recruitment and clustering of synaptic vesicles in the active zone of presynaptic terminals in serotonergic NSM neurons, and coordinates the release of synaptic vesicles at presynaptic terminals to regulate neurotransmission at neuromuscular junctions. Regulates synapse number in inhibitory motor neurons and plays a role in spontaneous postsynaptic synaptic vesicle release in muscle cells. This chain is Protein clarinet, found in Caenorhabditis elegans.